The primary structure comprises 378 residues: MGLFLNKIVIPGYFSHLRSMVGSLSRGISRKATLEYYAQVADEETAKAVDGWTCKSEAEKSVALFEEISFLVHKIIVRCLMGQDFYDHHVRELYDLLRTMEANVGSIWHTVLPGWVAHGPARRLWRCRQRVQEIFDFRLRERERSPEEWKKRLDYISYTLQDPATAHLSRFYGAHHTLLMFAAHTSTVASISWILLEWKSPHRLQRLREELATHALEQSPFLDALVKETGRHYSGNSDVRWARKPKTLRTEVASVPESRITIPEGTIVSISPYLTHHDPATWDNADTYLPERWLADPDLAKKMNEGGQLRYIPFGAGSHRCPGEKMAILIAKIAVARIVQSCDLAWGEGSSENTLGGLDFSKVGSPWLKGDVQVRFQV.

Cys-321 is a heme binding site.

It belongs to the cytochrome P450 family. It depends on heme as a cofactor.

Its pathway is secondary metabolite biosynthesis. Cytochrome P450 monooxygenase pytD; part of the gene cluster that mediates the biosynthesis of pyranterreones, a family of antioxidative compounds. The first step of pyranonigrins biosynthesis is performed by the hybrid PKS-NRPS synthetase pytA that condenses 4 malonyl-CoA units ato the acetyl starter unit by the modular PKS of pytA. The acyl chain is then connected to an L-serine through the amide bond by the modular NRPS of pytA. A tetramic acid is formed and released from the PKS-NRPS pytA to give pyranterreone 5 with the help of the thioesterase pytI. Pyranterreone 5 could be methylated by pytC to afford pyranterreone 6. Both pyranterreones 5 and 6 are subsequently oxidized by the FAD-linked oxidoreductase pytB and the cytochrome P450 monooxygenase pytD to form the fused gamma-pyrone core, resulting in pyranterreones 7 and 11, respectively. The hydroxy group at C-8 of pyranterreones 7 and 11 are dehydrated by the aspartyl protease pytH to form a delta-7 double bond to give pyranterreones 3 and 1, 2 accordingly. The exo-methylene of pyranterreone 3 could be reduced into a pendant methyl by reductase pytE to provide pyranterreone 4, also known as cordylactam. Pyranterreone 4 can be reconverted to pyranterreone 3 through pytB-catalyzed dehydrogenation or further oxidized to pyranterreones 9 and 10. This is Cytochrome P450 monooxygenase pytD from Aspergillus terreus (strain NIH 2624 / FGSC A1156).